The sequence spans 538 residues: Non-specific phospholipase C4 (538 aa).

A disordered region spans residues 91–112; the sequence is KPWDSGKPDPNPGHPNMSGFAQ.

The protein belongs to the bacterial phospholipase C family. As to expression, expressed in root tips, cotyledons, on leaf margins, stems, young anthers and funiculus.

The protein resides in the cell membrane. The catalysed reaction is a 1,2-diacyl-sn-glycero-3-phosphocholine + H2O = phosphocholine + a 1,2-diacyl-sn-glycerol + H(+). In terms of biological role, non-specific phospholipase C (PLC) which assumes major PLC activity during inorganic phosphate starvation. Substrate preference is phosphatidylcholine (PC), but can also hydrolyze phosphatidylethanolamine (PE) with lower efficiency. Has no activity toward phosphatidic acid (PA). Plays an important role in the supply of both inorganic phosphate and diacylglycerol from membrane-localized phospholipids during phosphate deprivation. May be required for lipid-derived signaling molecules that positively modulate abscisic acid (ABA) response and promote plant tolerance to drought and salt stresses. May be involved in brassinolide-mediated signaling in root development. The chain is Non-specific phospholipase C4 (NPC4) from Arabidopsis thaliana (Mouse-ear cress).